Reading from the N-terminus, the 289-residue chain is UPF0725 protein At1g27860 (289 aa).

The interval 266–289 (DQQRSMTLPSGEQAESSKKRPRLS) is disordered. Residues 268–279 (QRSMTLPSGEQA) are compositionally biased toward polar residues.

The protein belongs to the UPF0725 (EMB2204) family.

The protein is UPF0725 protein At1g27860 of Arabidopsis thaliana (Mouse-ear cress).